The sequence spans 367 residues: 2-oxoisovalerate dehydrogenase subunit alpha (367 aa).

Substrate is bound by residues F66, Y95, 128–131, and S144; that span reads MPEH. 94-96 lines the thiamine diphosphate pocket; sequence YYR. Thiamine diphosphate-binding positions include 144-146, 174-180, 204-208, and H273; these read SPI, GDGATSE, and NFYAI. Residues D175, N204, and Y206 each contribute to the Mg(2+) site.

This sequence belongs to the BCKDHA family. Heterotetramer of two alpha and two beta chains. Directly associated with ODBB in the E1 complex. Requires thiamine diphosphate as cofactor.

The enzyme catalyses N(6)-[(R)-lipoyl]-L-lysyl-[protein] + 3-methyl-2-oxobutanoate + H(+) = N(6)-[(R)-S(8)-2-methylpropanoyldihydrolipoyl]-L-lysyl-[protein] + CO2. Functionally, the branched-chain alpha-keto dehydrogenase complex catalyzes the overall conversion of alpha-keto acids to acyl-CoA and CO(2). It contains multiple copies of three enzymatic components: branched-chain alpha-keto acid decarboxylase (E1), lipoamide acyltransferase (E2) and lipoamide dehydrogenase (E3). This chain is 2-oxoisovalerate dehydrogenase subunit alpha, found in Thermus thermophilus (strain ATCC 27634 / DSM 579 / HB8).